The chain runs to 229 residues: Secretory carrier-associated membrane protein 4 (229 aa).

At 1-39 (MSEKENNFPPLPKFIPVKPCFYQNFSDEIPVEHQVLVKR) the chain is on the cytoplasmic side. 4 helical membrane-spanning segments follow: residues 40–60 (IYRL…ACLA), 61–81 (WWIG…LLLF), 105–125 (FMAF…QAIG), and 149–169 (VVML…AIAI). The Cytoplasmic portion of the chain corresponds to 170–229 (MKVHRIYRGAGGSFQKAQTEWNTGTWRNPPSREAQYNNFSGNSLPEYPTVPSYPGSGQWP). The residue at position 194 (Thr194) is a Phosphothreonine. A disordered region spans residues 208 to 229 (FSGNSLPEYPTVPSYPGSGQWP).

Belongs to the SCAMP family.

Its subcellular location is the membrane. Probably involved in membrane protein trafficking. The chain is Secretory carrier-associated membrane protein 4 (SCAMP4) from Homo sapiens (Human).